Consider the following 515-residue polypeptide: Maturase K (515 aa).

The protein belongs to the intron maturase 2 family. MatK subfamily.

Its subcellular location is the plastid. It localises to the chloroplast. Its function is as follows. Usually encoded in the trnK tRNA gene intron. Probably assists in splicing its own and other chloroplast group II introns. The protein is Maturase K of Zingiber mioga (Myoga ginger).